The following is a 217-amino-acid chain: Adapter protein MecA (217 aa).

This sequence belongs to the MecA family. Homodimer.

In terms of biological role, enables the recognition and targeting of unfolded and aggregated proteins to the ClpC protease or to other proteins involved in proteolysis. Acts negatively in the development of competence by binding ComK and recruiting it to the ClpCP protease. When overexpressed, inhibits sporulation. Also involved in Spx degradation by ClpC. This is Adapter protein MecA from Alkalihalophilus pseudofirmus (strain ATCC BAA-2126 / JCM 17055 / OF4) (Bacillus pseudofirmus).